The sequence spans 103 residues: Small ribosomal subunit protein uS10 (103 aa).

This sequence belongs to the universal ribosomal protein uS10 family. Part of the 30S ribosomal subunit.

Involved in the binding of tRNA to the ribosomes. The chain is Small ribosomal subunit protein uS10 from Acinetobacter baumannii (strain AB307-0294).